Reading from the N-terminus, the 349-residue chain is tRNA pseudouridine synthase D (349 aa).

A substrate-binding site is contributed by phenylalanine 27. Aspartate 80 serves as the catalytic Nucleophile. Asparagine 129 provides a ligand contact to substrate. The TRUD domain occupies 155–303 (GVPNYFGAQR…VEAARRAMLL (149 aa)). Phenylalanine 329 lines the substrate pocket.

This sequence belongs to the pseudouridine synthase TruD family.

The catalysed reaction is uridine(13) in tRNA = pseudouridine(13) in tRNA. Functionally, responsible for synthesis of pseudouridine from uracil-13 in transfer RNAs. The chain is tRNA pseudouridine synthase D from Shigella boydii serotype 18 (strain CDC 3083-94 / BS512).